The following is a 416-amino-acid chain: Prostate tumor-overexpressed gene 1 protein homolog (416 aa).

A disordered region spans residues 1-53; the sequence is MVRPRRAPHRSGAGGPLGGRGRPPRPLVVRAVRSRSWPAGPRGPQPPRIRARS. A compositionally biased stretch (gly residues) spans 12–21; sequence GAGGPLGGRG. The segment covering 27–36 has biased composition (low complexity); sequence LVVRAVRSRS. S53 is modified (phosphoserine). The tract at residues 184-416 is interaction with FLOT1; sequence NGFAGCMLFP…QEQQQRGMGG (233 aa).

This sequence belongs to the Mediator complex subunit 25 family. PTOV1 subfamily. May interact with CREBBP. Interacts with FLOT1. Ubiquitinated by the CRL2(KLHDC2) complex, which recognizes the diglycine (Gly-Gly) at the C-terminus, leading to its degradation. Ubiquitinated by the CRL2(APPBP2) complex, which recognizes the Arg-Xaa-Xaa-Gly sequence at the C-terminus, leading to its degradation.

Its subcellular location is the cytoplasm. The protein resides in the nucleus. It is found in the cell membrane. The protein localises to the perinuclear region. Its function is as follows. May activate transcription. Required for nuclear translocation of FLOT1. Promotes cell proliferation. The chain is Prostate tumor-overexpressed gene 1 protein homolog (Ptov1) from Rattus norvegicus (Rat).